Consider the following 127-residue polypeptide: Holo-[acyl-carrier-protein] synthase (127 aa).

The Mg(2+) site is built by aspartate 8 and glutamate 59.

The protein belongs to the P-Pant transferase superfamily. AcpS family. It depends on Mg(2+) as a cofactor.

Its subcellular location is the cytoplasm. The enzyme catalyses apo-[ACP] + CoA = holo-[ACP] + adenosine 3',5'-bisphosphate + H(+). In terms of biological role, transfers the 4'-phosphopantetheine moiety from coenzyme A to a Ser of acyl-carrier-protein. The sequence is that of Holo-[acyl-carrier-protein] synthase from Rickettsia bellii (strain OSU 85-389).